A 326-amino-acid polypeptide reads, in one-letter code: Protein-ribulosamine 3-kinase, chloroplastic (326 aa).

A chloroplast-targeting transit peptide spans 1 to 30; the sequence is MAVASLSICFSARPHLLLRNFSPRPKFVAM. ATP is bound at residue 125-127; it reads EFI. Asp-230 (proton acceptor) is an active-site residue.

Belongs to the fructosamine kinase family.

The protein resides in the plastid. Its subcellular location is the chloroplast. The enzyme catalyses N(6)-D-ribulosyl-L-lysyl-[protein] + ATP = N(6)-(3-O-phospho-D-ribulosyl)-L-lysyl-[protein] + ADP + H(+). It carries out the reaction N(6)-(D-erythrulosyl)-L-lysyl-[protein] + ATP = N(6)-(3-O-phospho-D-erythrulosyl)-L-lysyl-[protein] + ADP + H(+). Initiates a process leading to the deglycation of proteins. Phosphorylates low-molecular-mass and protein-bound erythrulosamines and ribulosamines, but not fructosamines or psicosamines, on the third carbon of the sugar moiety. Protein-bound erythrulosamine 3-phosphates and ribulosamine 3-phosphates are unstable and decompose under physiological conditions. In Arabidopsis thaliana (Mouse-ear cress), this protein is Protein-ribulosamine 3-kinase, chloroplastic.